We begin with the raw amino-acid sequence, 133 residues long: Endoribonuclease YbeY (133 aa).

Residues H105, H109, and H115 each coordinate Zn(2+).

This sequence belongs to the endoribonuclease YbeY family. It depends on Zn(2+) as a cofactor.

The protein resides in the cytoplasm. Single strand-specific metallo-endoribonuclease involved in late-stage 70S ribosome quality control and in maturation of the 3' terminus of the 16S rRNA. The sequence is that of Endoribonuclease YbeY from Lawsonia intracellularis (strain PHE/MN1-00).